Consider the following 386-residue polypeptide: L-lactate dehydrogenase (386 aa).

Residues 1–380 (MIISAASDYR…SGDALSRVTR (380 aa)) form the FMN hydroxy acid dehydrogenase domain. Tyr24 provides a ligand contact to substrate. Ser106 and Gln127 together coordinate FMN. Tyr129 contacts substrate. FMN is bound at residue Thr155. A substrate-binding site is contributed by Arg164. An FMN-binding site is contributed by Lys251. Residue His275 is the Proton acceptor of the active site. Residue Arg278 coordinates substrate. 306–330 (DSGIRSGLDVVRMLALGADAVLLGR) is an FMN binding site.

The protein belongs to the FMN-dependent alpha-hydroxy acid dehydrogenase family. It depends on FMN as a cofactor.

The protein resides in the cell inner membrane. It carries out the reaction (S)-lactate + A = pyruvate + AH2. Its function is as follows. Catalyzes the conversion of L-lactate to pyruvate. Is coupled to the respiratory chain. This Xanthomonas campestris pv. campestris (strain B100) protein is L-lactate dehydrogenase.